The chain runs to 488 residues: Acetyl-coenzyme A carboxylase carboxyl transferase subunit beta, chloroplastic (488 aa).

The tract at residues 189–211 is disordered; that stretch reads ISGSDSGSSNIRTDGNGSDIRGR. Positions 224 to 488 constitute a CoA carboxyltransferase N-terminal domain; it reads LWVQCENCYG…LHGFFPLTQN (265 aa). The Zn(2+) site is built by Cys228, Cys231, Cys247, and Cys250. The segment at 228-250 adopts a C4-type zinc-finger fold; sequence CENCYGLNYKKFFKSKMNICEQC.

It belongs to the AccD/PCCB family. As to quaternary structure, acetyl-CoA carboxylase is a heterohexamer composed of biotin carboxyl carrier protein, biotin carboxylase and 2 subunits each of ACCase subunit alpha and ACCase plastid-coded subunit beta (accD). The cofactor is Zn(2+).

Its subcellular location is the plastid. The protein resides in the chloroplast stroma. It carries out the reaction N(6)-carboxybiotinyl-L-lysyl-[protein] + acetyl-CoA = N(6)-biotinyl-L-lysyl-[protein] + malonyl-CoA. It functions in the pathway lipid metabolism; malonyl-CoA biosynthesis; malonyl-CoA from acetyl-CoA: step 1/1. Functionally, component of the acetyl coenzyme A carboxylase (ACC) complex. Biotin carboxylase (BC) catalyzes the carboxylation of biotin on its carrier protein (BCCP) and then the CO(2) group is transferred by the transcarboxylase to acetyl-CoA to form malonyl-CoA. The sequence is that of Acetyl-coenzyme A carboxylase carboxyl transferase subunit beta, chloroplastic from Liriodendron tulipifera (Tuliptree).